An 80-amino-acid chain; its full sequence is UPF0512 protein J (80 aa).

The protein belongs to the UPF0512 family.

The protein is UPF0512 protein J of Dictyostelium discoideum (Social amoeba).